Consider the following 433-residue polypeptide: Urokinase-type plasminogen activator (433 aa).

Positions 1 to 20 are cleaved as a signal peptide; the sequence is MKVWLASLFLCALVVKNSEG. One can recognise an EGF-like domain in the interval 28 to 64; it reads DESNCGCQNGGVCVSYKYFSRIRRCSCPRKFQGEHCE. Disulfide bonds link cysteine 32–cysteine 40, cysteine 34–cysteine 52, cysteine 54–cysteine 63, cysteine 71–cysteine 152, cysteine 92–cysteine 134, and cysteine 123–cysteine 147. Positions 35–58 are binds urokinase plasminogen activator surface receptor; the sequence is QNGGVCVSYKYFSRIRRCSCPRKF. In terms of domain architecture, Kringle spans 71–152; that stretch reads CYHGNGDSYR…FVQECMVHDC (82 aa). The connecting peptide stretch occupies residues 153-179; that stretch reads SLSKKPSSSVDQQGFQCGQKALRPRFK. At serine 159 the chain carries Phosphoserine. 6 disulfides stabilise this stretch: cysteine 169–cysteine 301, cysteine 211–cysteine 227, cysteine 219–cysteine 290, cysteine 315–cysteine 384, cysteine 347–cysteine 363, and cysteine 374–cysteine 402. One can recognise a Peptidase S1 domain in the interval 180–426; that stretch reads IVGGEFTEVE…FLDWIQSHIG (247 aa). Active-site charge relay system residues include histidine 226 and aspartate 277. Serine 378 functions as the Charge relay system in the catalytic mechanism.

This sequence belongs to the peptidase S1 family. As to quaternary structure, found in high and low molecular mass forms. Each consists of two chains, A and B. The high molecular mass form contains a long chain A which is cleaved to yield a short chain A. Forms heterodimer with SERPINA5. Binds LRP1B; binding is followed by internalization and degradation. Interacts with MRC2. Interacts with PLAUR. In complex with SERPINE1, interacts with PLAUR/uPAR. Interacts with SORL1 and LRP1, either alone or in complex with SERPINE1; these interactions are abolished in the presence of LRPAP1/RAP. The ternary complex composed of PLAUR-PLAU-PAI1 also interacts with SORLA. Produced as an inactive single-chain protein (pro-uPA or sc-uPA), is processed into the active disulfide-linked two-chain form of PLAU/uPA by a proteolytic event mediated, at least, by TMPRSS4.

It is found in the secreted. It catalyses the reaction Specific cleavage of Arg-|-Val bond in plasminogen to form plasmin.. Inhibited by SERPINA5. Inhibited by SERPINE1. In terms of biological role, specifically cleaves the zymogen plasminogen to form the active enzyme plasmin. In Mus musculus (Mouse), this protein is Urokinase-type plasminogen activator (Plau).